The following is a 132-amino-acid chain: MVMTDPIADFLTRIRNANMVKHDKLELPASKIKKEIAEILKREGFIRDVEYIEDDNAGTIRVFLKYGATGERVITGLKRISKPGLRVYAKSTEVPKVLNGLGIAIVSTSQGVLTDKEARAKQVGGEVLAYVW.

This sequence belongs to the universal ribosomal protein uS8 family. Part of the 30S ribosomal subunit. Contacts proteins S5 and S12.

Its function is as follows. One of the primary rRNA binding proteins, it binds directly to 16S rRNA central domain where it helps coordinate assembly of the platform of the 30S subunit. The chain is Small ribosomal subunit protein uS8 from Listeria innocua serovar 6a (strain ATCC BAA-680 / CLIP 11262).